We begin with the raw amino-acid sequence, 104 residues long: MTNRLALSGTVCRMPLRKVSPSGIPHCQFVLEHRSVQEEAGFHRQAWCQMPVIVSGHENQAITHSITVGSRITVQGFISCHKAKNGLSKMVLHAEQIELIDSGD.

Positions 1–101 (MTNRLALSGT…LHAEQIELID (101 aa)) constitute an SSB domain.

It belongs to the PriB family. Homodimer. Interacts with PriA and DnaT. Component of the replication restart primosome. Primosome assembly occurs via a 'hand-off' mechanism. PriA binds to replication forks, subsequently PriB then DnaT bind; DnaT then displaces ssDNA to generate the helicase loading substrate.

Its function is as follows. Involved in the restart of stalled replication forks, which reloads the replicative helicase on sites other than the origin of replication; the PriA-PriB pathway is the major replication restart pathway. During primosome assembly it facilitates complex formation between PriA and DnaT on DNA; stabilizes PriA on DNA. Stimulates the DNA unwinding activity of PriA helicase. This chain is Replication restart protein PriB, found in Citrobacter koseri (strain ATCC BAA-895 / CDC 4225-83 / SGSC4696).